Consider the following 297-residue polypeptide: HTH-type transcriptional regulator ArgP (297 aa).

The HTH lysR-type domain maps to 4-60 (PDYRTLQALDAVIRERGFERAAQKLCITQSAVSQRIKQLENLFGQPLLVRTIPPRPT). The segment at residues 21–40 (FERAAQKLCITQSAVSQRIK) is a DNA-binding region (H-T-H motif).

Belongs to the LysR transcriptional regulatory family. In terms of assembly, homodimer.

Controls the transcription of genes involved in arginine and lysine metabolism. The sequence is that of HTH-type transcriptional regulator ArgP from Pectobacterium carotovorum subsp. carotovorum (strain PC1).